Reading from the N-terminus, the 324-residue chain is Phospho-N-acetylmuramoyl-pentapeptide-transferase (324 aa).

Transmembrane regions (helical) follow at residues 5–25 (VILFTIIMGFLISVLISPILI), 50–70 (GTPTMGGVMIIVSIAITAIVM), 77–97 (LSAEMFLLLFVTIGYGLLGFL), 117–137 (LIGQIIIAIVFYGVYHYCHFS), 147–167 (LSIDLGWGYFILVLFMLVGGS), 176–196 (LDGLLSGTAAIAFGAFAILAW), 203–223 (VAIFSVAVVGAVLGFLVFNAH), 227–247 (VFMGDTGSLALGGAIVTVAIL), 250–270 (LEILLVIIGGVFVIETLSVIL), and 302–322 (VVVTFWTAGLLLAVLGIYIEV).

Belongs to the glycosyltransferase 4 family. MraY subfamily. It depends on Mg(2+) as a cofactor.

The protein resides in the cell membrane. The catalysed reaction is UDP-N-acetyl-alpha-D-muramoyl-L-alanyl-gamma-D-glutamyl-meso-2,6-diaminopimeloyl-D-alanyl-D-alanine + di-trans,octa-cis-undecaprenyl phosphate = di-trans,octa-cis-undecaprenyl diphospho-N-acetyl-alpha-D-muramoyl-L-alanyl-D-glutamyl-meso-2,6-diaminopimeloyl-D-alanyl-D-alanine + UMP. The protein operates within cell wall biogenesis; peptidoglycan biosynthesis. Catalyzes the initial step of the lipid cycle reactions in the biosynthesis of the cell wall peptidoglycan: transfers peptidoglycan precursor phospho-MurNAc-pentapeptide from UDP-MurNAc-pentapeptide onto the lipid carrier undecaprenyl phosphate, yielding undecaprenyl-pyrophosphoryl-MurNAc-pentapeptide, known as lipid I. The protein is Phospho-N-acetylmuramoyl-pentapeptide-transferase of Bacillus velezensis (strain DSM 23117 / BGSC 10A6 / LMG 26770 / FZB42) (Bacillus amyloliquefaciens subsp. plantarum).